The following is a 199-amino-acid chain: dITP/XTP pyrophosphatase (199 aa).

8–13 (TSNINK) contributes to the substrate binding site. D68 acts as the Proton acceptor in catalysis. Mg(2+) is bound at residue D68. Residues S69, 155–158 (FGYD), K177, and 182–183 (HR) each bind substrate.

It belongs to the HAM1 NTPase family. As to quaternary structure, homodimer. The cofactor is Mg(2+).

It carries out the reaction XTP + H2O = XMP + diphosphate + H(+). It catalyses the reaction dITP + H2O = dIMP + diphosphate + H(+). The enzyme catalyses ITP + H2O = IMP + diphosphate + H(+). In terms of biological role, pyrophosphatase that catalyzes the hydrolysis of nucleoside triphosphates to their monophosphate derivatives, with a high preference for the non-canonical purine nucleotides XTP (xanthosine triphosphate), dITP (deoxyinosine triphosphate) and ITP. Seems to function as a house-cleaning enzyme that removes non-canonical purine nucleotides from the nucleotide pool, thus preventing their incorporation into DNA/RNA and avoiding chromosomal lesions. In Borrelia duttonii (strain Ly), this protein is dITP/XTP pyrophosphatase.